The chain runs to 250 residues: Probable E3 ubiquitin-protein ligase RHY1A (250 aa).

A compositionally biased stretch (polar residues) spans 1–10 (MTSASELFST). A disordered region spans residues 1-106 (MTSASELFST…ETQSSSFVNL (106 aa)). Over residues 29–47 (YRHHSHHHHRRHGVHHHNQ) the composition is skewed to basic residues. The segment covering 48–58 (RHDSDGCDPLR) has biased composition (basic and acidic residues). A compositionally biased stretch (basic residues) spans 60-69 (PTPRLRRFFH). Basic and acidic residues predominate over residues 71–80 (PIQERSRPIR). Over residues 91 to 102 (TDSTDTETQSSS) the composition is skewed to low complexity. Residues 203–244 (CSICLESFTKGDMLISLPCTHSFHSSCLNPWLRACGDCPCCR) form an RING-type; atypical zinc finger.

It carries out the reaction S-ubiquitinyl-[E2 ubiquitin-conjugating enzyme]-L-cysteine + [acceptor protein]-L-lysine = [E2 ubiquitin-conjugating enzyme]-L-cysteine + N(6)-ubiquitinyl-[acceptor protein]-L-lysine.. It participates in protein modification; protein ubiquitination. Probable E3 ubiquitin-protein ligase that may possess E3 ubiquitin ligase activity in vitro. In Arabidopsis thaliana (Mouse-ear cress), this protein is Probable E3 ubiquitin-protein ligase RHY1A.